Here is a 439-residue protein sequence, read N- to C-terminus: FBD-associated F-box protein At5g56380 (439 aa).

Residues 1–61 form the F-box domain; sequence MDRISHLADE…LPETWGYQEP (61 aa). The FBD domain occupies 358–406; it reads WNQPGSVPRCLSSSLETLEWVEYGGTHEEKELSTYLFKTAVCFKKASFT.

The chain is FBD-associated F-box protein At5g56380 from Arabidopsis thaliana (Mouse-ear cress).